The following is a 159-amino-acid chain: 2-C-methyl-D-erythritol 2,4-cyclodiphosphate synthase (159 aa).

Positions 10 and 12 each coordinate a divalent metal cation. 4-CDP-2-C-methyl-D-erythritol 2-phosphate is bound by residues 10–12 (DVH) and 37–38 (HS). An a divalent metal cation-binding site is contributed by His45. Residues 59-61 (DIG), 64-68 (FLDTD), 103-109 (AQAPKML), 135-138 (TTTE), Phe142, and Arg145 each bind 4-CDP-2-C-methyl-D-erythritol 2-phosphate.

It belongs to the IspF family. In terms of assembly, homotrimer. A divalent metal cation serves as cofactor.

It carries out the reaction 4-CDP-2-C-methyl-D-erythritol 2-phosphate = 2-C-methyl-D-erythritol 2,4-cyclic diphosphate + CMP. Its pathway is isoprenoid biosynthesis; isopentenyl diphosphate biosynthesis via DXP pathway; isopentenyl diphosphate from 1-deoxy-D-xylulose 5-phosphate: step 4/6. Functionally, involved in the biosynthesis of isopentenyl diphosphate (IPP) and dimethylallyl diphosphate (DMAPP), two major building blocks of isoprenoid compounds. Catalyzes the conversion of 4-diphosphocytidyl-2-C-methyl-D-erythritol 2-phosphate (CDP-ME2P) to 2-C-methyl-D-erythritol 2,4-cyclodiphosphate (ME-CPP) with a corresponding release of cytidine 5-monophosphate (CMP). This Francisella tularensis subsp. holarctica (strain OSU18) protein is 2-C-methyl-D-erythritol 2,4-cyclodiphosphate synthase.